Here is a 216-residue protein sequence, read N- to C-terminus: Imidazole glycerol phosphate synthase subunit HisH (216 aa).

The Glutamine amidotransferase type-1 domain occupies 2 to 216; the sequence is RVAIIDYGSG…LIANFLKWKP (215 aa). The Nucleophile role is filled by C88. Catalysis depends on residues H196 and E198.

Heterodimer of HisH and HisF.

The protein localises to the cytoplasm. The enzyme catalyses 5-[(5-phospho-1-deoxy-D-ribulos-1-ylimino)methylamino]-1-(5-phospho-beta-D-ribosyl)imidazole-4-carboxamide + L-glutamine = D-erythro-1-(imidazol-4-yl)glycerol 3-phosphate + 5-amino-1-(5-phospho-beta-D-ribosyl)imidazole-4-carboxamide + L-glutamate + H(+). It carries out the reaction L-glutamine + H2O = L-glutamate + NH4(+). Its pathway is amino-acid biosynthesis; L-histidine biosynthesis; L-histidine from 5-phospho-alpha-D-ribose 1-diphosphate: step 5/9. Its function is as follows. IGPS catalyzes the conversion of PRFAR and glutamine to IGP, AICAR and glutamate. The HisH subunit catalyzes the hydrolysis of glutamine to glutamate and ammonia as part of the synthesis of IGP and AICAR. The resulting ammonia molecule is channeled to the active site of HisF. This chain is Imidazole glycerol phosphate synthase subunit HisH, found in Brucella suis biovar 1 (strain 1330).